The sequence spans 131 residues: Small ribosomal subunit protein uS10m (131 aa).

The protein belongs to the universal ribosomal protein uS10 family.

The protein resides in the mitochondrion. This is Small ribosomal subunit protein uS10m (mrps10) from Dictyostelium discoideum (Social amoeba).